Consider the following 388-residue polypeptide: Chitinase 4 (388 aa).

A GH18 domain is found at 22-375 (FKTCVYFSNW…KNFVDQLGGV (354 aa)). N-linked (GlcNAc...) asparagine glycans are attached at residues Asn30 and Asn82. Residues 82–83 (NQ) and 109–112 (GGWG) contribute to the chitin site. Asn123 and Asn132 each carry an N-linked (GlcNAc...) asparagine glycan. Catalysis depends on Glu151, which acts as the Proton donor. Tyr152 serves as a coordination point for chitin. Residue Asn155 is glycosylated (N-linked (GlcNAc...) asparagine). 208-211 (MCYD) lines the chitin pocket. Asn237 carries N-linked (GlcNAc...) asparagine glycosylation. Trp350 is a chitin binding site.

This sequence belongs to the glycosyl hydrolase 18 family. Chitinase class V subfamily.

The protein localises to the secreted. The enzyme catalyses Random endo-hydrolysis of N-acetyl-beta-D-glucosaminide (1-&gt;4)-beta-linkages in chitin and chitodextrins.. Chitinase involved in the remodeling of chitin in the fungal cell wall. Plays a role in sporulation. The chain is Chitinase 4 (CHT4) from Candida albicans (strain SC5314 / ATCC MYA-2876) (Yeast).